Consider the following 344-residue polypeptide: Tetraacyldisaccharide 4'-kinase (344 aa).

ATP is bound at residue 65–72 (HAGGTGKT).

It belongs to the LpxK family.

It catalyses the reaction a lipid A disaccharide + ATP = a lipid IVA + ADP + H(+). It participates in glycolipid biosynthesis; lipid IV(A) biosynthesis; lipid IV(A) from (3R)-3-hydroxytetradecanoyl-[acyl-carrier-protein] and UDP-N-acetyl-alpha-D-glucosamine: step 6/6. Transfers the gamma-phosphate of ATP to the 4'-position of a tetraacyldisaccharide 1-phosphate intermediate (termed DS-1-P) to form tetraacyldisaccharide 1,4'-bis-phosphate (lipid IVA). The sequence is that of Tetraacyldisaccharide 4'-kinase from Neisseria meningitidis serogroup B (strain ATCC BAA-335 / MC58).